The chain runs to 292 residues: Polyisoprenoid diphosphate/phosphate phosphohydrolase PLPP6 (292 aa).

Disordered regions lie at residues Met-1–Gly-34 and Gly-66–Asp-86. Residues Met-1–Met-131 are Cytoplasmic-facing. The segment covering Gly-10–Pro-25 has biased composition (low complexity). Ser-24 and Ser-67 each carry phosphoserine. A compositionally biased stretch (low complexity) spans Pro-69–Ala-79. A helical membrane pass occupies residues Lys-132–Leu-152. Residues Arg-153–Glu-161 are Lumenal-facing. Residues Val-162–Gly-182 traverse the membrane as a helical segment. Positions Lys-181–Pro-189 are phosphatase sequence motif I. The Cytoplasmic portion of the chain corresponds to Leu-183–His-225. Residues Pro-208–His-211 form a phosphatase sequence motif II region. The active-site Proton donors is His-211. A helical membrane pass occupies residues Leu-226 to Ser-246. Positions Ser-246–Asp-257 are phosphatase sequence motif III. The Lumenal portion of the chain corresponds to Arg-247 to Asp-257. The active-site Nucleophile is the His-253. Residues Val-258 to Ser-278 form a helical membrane-spanning segment. Topologically, residues Pro-279–Gln-292 are cytoplasmic.

The protein belongs to the PA-phosphatase related phosphoesterase family. Phosphorylation by PKC activates the phosphatase activity towards presqualene diphosphate.

Its subcellular location is the endoplasmic reticulum membrane. The protein resides in the nucleus envelope. The protein localises to the nucleus inner membrane. The enzyme catalyses presqualene diphosphate + H2O = presqualene phosphate + phosphate + H(+). The catalysed reaction is presqualene phosphate + H2O = presqualene alcohol + phosphate. It catalyses the reaction (2E,6E)-farnesyl diphosphate + H2O = (2E,6E)-farnesyl phosphate + phosphate + H(+). It carries out the reaction (2E,6E)-farnesyl phosphate + H2O = (2E,6E)-farnesol + phosphate. The enzyme catalyses (2E,6E,10E)-geranylgeranyl diphosphate + H2O = (2E,6E,10E)-geranylgeranyl phosphate + phosphate + H(+). The catalysed reaction is (2E,6E,10E)-geranylgeranyl phosphate + H2O = (2E,6E,10E)-geranylgeraniol + phosphate. It catalyses the reaction (2E)-geranyl diphosphate + H2O = (2E)-geranyl phosphate + phosphate + H(+). It carries out the reaction (2E)-geranyl phosphate + H2O = (2E)-geraniol + phosphate. The enzyme catalyses 1,2-dihexadecanoyl-sn-glycero-3-phosphate + H2O = 1,2-dihexadecanoyl-sn-glycerol + phosphate. Its function is as follows. Magnesium-independent polyisoprenoid diphosphatase that catalyzes the sequential dephosphorylation of presqualene, farnesyl, geranyl and geranylgeranyl diphosphates. Functions in the innate immune response through the dephosphorylation of presqualene diphosphate which acts as a potent inhibitor of the signaling pathways contributing to polymorphonuclear neutrophils activation. May regulate the biosynthesis of cholesterol and related sterols by dephosphorylating presqualene and farnesyl diphosphate, two key intermediates in this biosynthetic pathway. May also play a role in protein prenylation by acting on farnesyl diphosphate and its derivative geranylgeranyl diphosphate, two precursors for the addition of isoprenoid anchors to membrane proteins. Has a lower activity towards phosphatidic acid (PA), but through phosphatidic acid dephosphorylation may participate in the biosynthesis of phospholipids and triacylglycerols. May also act on ceramide-1-P, lysophosphatidic acid (LPA) and sphing-4-enine 1-phosphate/sphingosine-1-phosphate. This chain is Polyisoprenoid diphosphate/phosphate phosphohydrolase PLPP6, found in Mus musculus (Mouse).